A 421-amino-acid polypeptide reads, in one-letter code: MSKTHLTEQKFSDFALHPKVVEALEKKGFHNCTPIQALALPLTLAGRDVAGQAQTGTGKTMAFLTSTFHYLLSHPAIADRKVNQPRALIMAPTRELAVQIHADAEPLAQATGLKLGLAYGGDGYDKQLKVLESGVDILIGTTGRLIDYAKQNHINLCAIQVVVLDEADRMYDLGFIKDIRWLFRRMPPANQRLNMLFSATLSYRVRELAFEQMNNAEYIEVEPEQKTGHRIKEELFYPSNEEKMRLLQTLIEEEWPDRAIIFANTKHRCEEIWGHLAADGHRVGLLTGDVAQKKRLRILDEFTRGDLDILVATDVAARGLHIPAVTHVFNYDLPDDCEDYVHRIGRTGRAGASGHSISLACEEYALNLPAIETYIGHSIPVSKYNPDALMTDLPKPLRLTRPRTGNGPRRTGAPRNRRRSG.

Residues 9-37 (QKFSDFALHPKVVEALEKKGFHNCTPIQA) carry the Q motif motif. A Helicase ATP-binding domain is found at 40–219 (LPLTLAGRDV…FEQMNNAEYI (180 aa)). Residue 53 to 60 (AQTGTGKT) coordinates ATP. The DEAD box signature appears at 165–168 (DEAD). Positions 245 to 390 (RLLQTLIEEE…VSKYNPDALM (146 aa)) constitute a Helicase C-terminal domain. A disordered region spans residues 392 to 421 (DLPKPLRLTRPRTGNGPRRTGAPRNRRRSG). Over residues 402–414 (PRTGNGPRRTGAP) the composition is skewed to low complexity.

The protein belongs to the DEAD box helicase family. RhlB subfamily. As to quaternary structure, component of the RNA degradosome, which is a multiprotein complex involved in RNA processing and mRNA degradation.

It localises to the cytoplasm. The catalysed reaction is ATP + H2O = ADP + phosphate + H(+). Functionally, DEAD-box RNA helicase involved in RNA degradation. Has RNA-dependent ATPase activity and unwinds double-stranded RNA. The chain is ATP-dependent RNA helicase RhlB from Escherichia coli (strain SMS-3-5 / SECEC).